The chain runs to 512 residues: Cytochrome P450 26B1 (512 aa).

Position 441 (cysteine 441) interacts with heme.

It belongs to the cytochrome P450 family. The cofactor is heme. Highly expressed in brain, particularly in the cerebellum and pons.

It localises to the endoplasmic reticulum membrane. The protein resides in the microsome membrane. The catalysed reaction is all-trans-retinoate + reduced [NADPH--hemoprotein reductase] + O2 = all-trans-4-hydroxyretinoate + oxidized [NADPH--hemoprotein reductase] + H2O + H(+). The enzyme catalyses all-trans-retinoate + reduced [NADPH--hemoprotein reductase] + O2 = all-trans-18-hydroxyretinoate + oxidized [NADPH--hemoprotein reductase] + H2O + H(+). Functionally, a cytochrome P450 monooxygenase involved in the metabolism of retinoates (RAs), the active metabolites of vitamin A, and critical signaling molecules in animals. RAs exist as at least four different isomers: all-trans-RA (atRA), 9-cis-RA, 13-cis-RA, and 9,13-dicis-RA, where atRA is considered to be the biologically active isomer, although 9-cis-RA and 13-cis-RA also have activity. Catalyzes the hydroxylation of atRA primarily at C-4 and C-18, thereby contributing to the regulation of atRA homeostasis and signaling. Hydroxylation of atRA limits its biological activity and initiates a degradative process leading to its eventual elimination. Involved in the convertion of atRA to all-trans-4-oxo-RA. Can oxidize all-trans-13,14-dihydroretinoate (DRA) to metabolites which could include all-trans-4-oxo-DRA, all-trans-4-hydroxy-DRA, all-trans-5,8-epoxy-DRA, and all-trans-18-hydroxy-DRA. Shows preference for the following substrates: atRA &gt; 9-cis-RA &gt; 13-cis-RA. Plays a central role in germ cell development: acts by degrading RAs in the developing testis, preventing STRA8 expression, thereby leading to delay of meiosis. Required for the maintenance of the undifferentiated state of male germ cells during embryonic development in Sertoli cells, inducing arrest in G0 phase of the cell cycle and preventing meiotic entry. Plays a role in skeletal development, both at the level of patterning and in the ossification of bone and the establishment of some synovial joints. Essential for postnatal survival. Its function is as follows. Also has a significant activity in oxidation of tazarotenic acid and may therefore metabolize that xenobiotic in vivo. This Homo sapiens (Human) protein is Cytochrome P450 26B1 (CYP26B1).